Here is a 173-residue protein sequence, read N- to C-terminus: Lens fiber membrane intrinsic protein (173 aa).

At 1–3 (MYS) the chain is on the cytoplasmic side. The chain crosses the membrane as a helical span at residues 4–24 (FMGGGLFCAWVGTILLVVATA). Residues 25-66 (TDHWMQYRLSGSFAHQGLWRYCLGNKCFLQTESIAYWNATRA) lie on the Extracellular side of the membrane. C-linked (Man) tryptophan glycosylation is found at W43 and W61. A glycan (N-linked (GlcNAc...) asparagine) is linked at N62. Residues 67–87 (FMILSALCATSGIIMGVLAFA) form a helical membrane-spanning segment. Residues 88–98 (QQSTFTRLSRP) are Cytoplasmic-facing. A helical transmembrane segment spans residues 99 to 119 (FSAGIMFFASTLFVLLALAIY). The Extracellular portion of the chain corresponds to 120–140 (TGVTVSFLGRRFGDWRFSWSY). Residues 141–161 (ILGWVALLMTFFAGIFYMCAY) form a helical membrane-spanning segment. Over 162 to 173 (RMHECRRLSTPR) the chain is Cytoplasmic. S170 is modified (phosphoserine). T171 bears the Phosphothreonine mark.

Belongs to the PMP-22/EMP/MP20 family. As to quaternary structure, seems to be associated with itself or another lens membrane component via disulfide bonds. As to expression, eye lens specific.

The protein resides in the membrane. Present in the thicker 16-17 nm junctions of mammalian lens fiber cells, where it may contribute to cell junctional organization. Acts as a receptor for calmodulin. May play an important role in both lens development and cataractogenesis. In Rattus norvegicus (Rat), this protein is Lens fiber membrane intrinsic protein (Lim2).